The following is a 1024-amino-acid chain: Carbamoyl phosphate synthase large chain (1024 aa).

A carboxyphosphate synthetic domain region spans residues Met-1–Asp-396. ATP is bound by residues Arg-125, Arg-165, Gly-171, Gly-172, Lys-204, Leu-206, Glu-211, Gly-237, Val-238, His-239, Gln-280, and Glu-294. The ATP-grasp 1 domain maps to Gln-129 to Leu-323. Gln-280, Glu-294, and Asn-296 together coordinate Mg(2+). The Mn(2+) site is built by Gln-280, Glu-294, and Asn-296. Residues Ile-397–Lys-536 form an oligomerization domain region. The segment at Lys-536–Asn-917 is carbamoyl phosphate synthetic domain. Residues Ser-660–Thr-849 form the ATP-grasp 2 domain. ATP is bound by residues Arg-696, Lys-735, Glu-742, Gly-766, Val-767, His-768, Ser-769, Gln-809, and Glu-820. The Mg(2+) site is built by Gln-809, Glu-820, and Asn-822. Positions 809, 820, and 822 each coordinate Mn(2+). Residues Asn-917–Trp-1024 enclose the MGS-like domain. Positions Lys-918 to Trp-1024 are allosteric domain.

This sequence belongs to the CarB family. As to quaternary structure, composed of two chains; the small (or glutamine) chain promotes the hydrolysis of glutamine to ammonia, which is used by the large (or ammonia) chain to synthesize carbamoyl phosphate. Tetramer of heterodimers (alpha,beta)4. Requires Mg(2+) as cofactor. Mn(2+) is required as a cofactor.

The catalysed reaction is hydrogencarbonate + L-glutamine + 2 ATP + H2O = carbamoyl phosphate + L-glutamate + 2 ADP + phosphate + 2 H(+). The enzyme catalyses hydrogencarbonate + NH4(+) + 2 ATP = carbamoyl phosphate + 2 ADP + phosphate + 2 H(+). The protein operates within amino-acid biosynthesis; L-arginine biosynthesis; carbamoyl phosphate from bicarbonate: step 1/1. Its pathway is pyrimidine metabolism; UMP biosynthesis via de novo pathway; (S)-dihydroorotate from bicarbonate: step 1/3. In terms of biological role, large subunit of the glutamine-dependent carbamoyl phosphate synthetase (CPSase). CPSase catalyzes the formation of carbamoyl phosphate from the ammonia moiety of glutamine, carbonate, and phosphate donated by ATP, constituting the first step of 2 biosynthetic pathways, one leading to arginine and/or urea and the other to pyrimidine nucleotides. The large subunit (synthetase) binds the substrates ammonia (free or transferred from glutamine from the small subunit), hydrogencarbonate and ATP and carries out an ATP-coupled ligase reaction, activating hydrogencarbonate by forming carboxy phosphate which reacts with ammonia to form carbamoyl phosphate. The polypeptide is Carbamoyl phosphate synthase large chain (Pyrobaculum aerophilum (strain ATCC 51768 / DSM 7523 / JCM 9630 / CIP 104966 / NBRC 100827 / IM2)).